The chain runs to 311 residues: Acetaldehyde dehydrogenase 1 (311 aa).

11–14 (SGNI) contacts NAD(+). Catalysis depends on C129, which acts as the Acyl-thioester intermediate. NAD(+)-binding positions include 161–169 (SAGPGTRAN) and N288.

It belongs to the acetaldehyde dehydrogenase family.

The catalysed reaction is acetaldehyde + NAD(+) + CoA = acetyl-CoA + NADH + H(+). The protein is Acetaldehyde dehydrogenase 1 of Novosphingobium aromaticivorans (strain ATCC 700278 / DSM 12444 / CCUG 56034 / CIP 105152 / NBRC 16084 / F199).